Reading from the N-terminus, the 354-residue chain is Magnesium-protoporphyrin IX monomethyl ester [oxidative] cyclase (354 aa).

This sequence belongs to the AcsF family. Fe cation is required as a cofactor.

The protein localises to the plastid. Its subcellular location is the chloroplast. It catalyses the reaction Mg-protoporphyrin IX 13-monomethyl ester + 3 NADPH + 3 O2 + 2 H(+) = 3,8-divinyl protochlorophyllide a + 3 NADP(+) + 5 H2O. It functions in the pathway porphyrin-containing compound metabolism; chlorophyll biosynthesis (light-independent). Catalyzes the formation of the isocyclic ring in chlorophyll biosynthesis. Mediates the cyclase reaction, which results in the formation of divinylprotochlorophyllide (Pchlide) characteristic of all chlorophylls from magnesium-protoporphyrin IX 13-monomethyl ester (MgPMME). This chain is Magnesium-protoporphyrin IX monomethyl ester [oxidative] cyclase, found in Cyanidium caldarium (Red alga).